A 253-amino-acid chain; its full sequence is Sulfate transporter CysZ (253 aa).

Helical transmembrane passes span 31-51 (FVIL…WWLF), 75-95 (LLWP…FSTI), 151-171 (IVLL…PVLW), and 222-242 (IPLL…AMWV).

It belongs to the CysZ family.

The protein localises to the cell inner membrane. Its function is as follows. High affinity, high specificity proton-dependent sulfate transporter, which mediates sulfate uptake. Provides the sulfur source for the cysteine synthesis pathway. The polypeptide is Sulfate transporter CysZ (Escherichia coli O139:H28 (strain E24377A / ETEC)).